Reading from the N-terminus, the 354-residue chain is Glutamine synthetase (354 aa).

The 80-residue stretch at 22-101 folds into the GS beta-grasp domain; sequence IQAEYVWVDG…VLAETYNSDG (80 aa). Positions 108–354 constitute a GS catalytic domain; sequence FRHHAAKVME…IIVETTLLNA (247 aa).

This sequence belongs to the glutamine synthetase family. As to quaternary structure, homooctamer.

The protein localises to the cytoplasm. It catalyses the reaction L-glutamate + NH4(+) + ATP = L-glutamine + ADP + phosphate + H(+). The chain is Glutamine synthetase (GLN1) from Hebeloma cylindrosporum.